A 232-amino-acid polypeptide reads, in one-letter code: Ribose-5-phosphate isomerase A (232 aa).

Residues 31-34 (TGST), 87-90 (DGAD), and 100-103 (KGGG) each bind substrate. The Proton acceptor role is filled by Glu-109. Lys-127 provides a ligand contact to substrate.

The protein belongs to the ribose 5-phosphate isomerase family. Homodimer.

The catalysed reaction is aldehydo-D-ribose 5-phosphate = D-ribulose 5-phosphate. Its pathway is carbohydrate degradation; pentose phosphate pathway; D-ribose 5-phosphate from D-ribulose 5-phosphate (non-oxidative stage): step 1/1. Functionally, catalyzes the reversible conversion of ribose-5-phosphate to ribulose 5-phosphate. This chain is Ribose-5-phosphate isomerase A, found in Bifidobacterium adolescentis (strain ATCC 15703 / DSM 20083 / NCTC 11814 / E194a).